Reading from the N-terminus, the 782-residue chain is Protein VAC14 homolog (782 aa).

N-acetylmethionine is present on Met-1. HEAT repeat units follow at residues 5–42 (KDFAPLTPNIVRALNDKLYEKRKVAALEIEKLVREFVA), 89–126 (LYLKELIEPVLTCFNDADSRLRYYACEALYNIVKVARG), 171–208 (FDLVSFIPLLRERIYSNNQYARQFIISWILVLESVPDI), and 212–249 (DYLPEILDGLFQILGDNGKEIRKMCEVVLGEFLKEIKK). A Phosphothreonine modification is found at Thr-11. Disordered regions lie at residues 335-372 (EDDELDELRPGQRQAEPTPDDALPKQEGTASGGPDGSC) and 471-517 (SSPA…LECS). An HEAT 5 repeat occupies 438–475 (RHTDSLFPILLQTLSDESDEVILKDLEVLAEIASSPAG). Low complexity predominate over residues 478-488 (DDPGPLDGPDL). Residue Thr-499 is modified to Phosphothreonine. Residues 506–517 (LNTSGTKGLECS) show a composition bias toward polar residues. Ser-517 carries the post-translational modification Phosphoserine. The HEAT 6 repeat unit spans residues 560-598 (LNAENIFHSMADILLREEDLKFASTMVHALNTILLTSTE). Ser-743 bears the Phosphoserine mark. The segment at 773-777 (GDHLD) is mediates interaction with the PDZ domain of NOS1.

The protein belongs to the VAC14 family. In terms of assembly, forms pentamers. Component of the PI(3,5)P2 regulatory complex/PAS complex, at least composed of PIKFYVE, FIG4 and VAC14. VAC14 nucleates the assembly of the complex and serves as a scaffold by pentamerizing into a star-shaped structure, which can bind a single copy each of PIKFYVE and FIG4 and coordinates their activities. Interacts with NOS1. As to quaternary structure, (Microbial infection) Interacts with HTLV-1 Tax. In terms of tissue distribution, ubiquitously expressed.

It localises to the endosome membrane. Its subcellular location is the microsome membrane. Functionally, scaffold protein component of the PI(3,5)P2 regulatory complex which regulates both the synthesis and turnover of phosphatidylinositol 3,5-bisphosphate (PtdIns(3,5)P2). Pentamerizes into a star-shaped structure and nucleates the assembly of the complex. The pentamer binds a single copy each of PIKFYVE and FIG4 and coordinates both PIKfyve kinase activity and FIG4 phosphatase activity, being required to maintain normal levels of phosphatidylinositol 3-phosphate (PtdIns(3)P) and phosphatidylinositol 5-phosphate (PtdIns(5)P). Plays a role in the biogenesis of endosome carrier vesicles (ECV) / multivesicular bodies (MVB) transport intermediates from early endosomes. The protein is Protein VAC14 homolog (VAC14) of Homo sapiens (Human).